We begin with the raw amino-acid sequence, 253 residues long: Triosephosphate isomerase, cytosolic (253 aa).

2 residues coordinate substrate: asparagine 10 and lysine 12. Residue histidine 96 is the Electrophile of the active site. The active-site Proton acceptor is glutamate 166.

Belongs to the triosephosphate isomerase family. Homodimer.

Its subcellular location is the cytoplasm. The catalysed reaction is D-glyceraldehyde 3-phosphate = dihydroxyacetone phosphate. The protein operates within carbohydrate biosynthesis; gluconeogenesis. It functions in the pathway carbohydrate degradation; glycolysis; D-glyceraldehyde 3-phosphate from glycerone phosphate: step 1/1. The polypeptide is Triosephosphate isomerase, cytosolic (Zea mays (Maize)).